The chain runs to 364 residues: Replication-associated protein (364 aa).

The CRESS-DNA virus Rep endonuclease domain occupies K17–F120. The RCR-1 signature appears at F24 to Y27. The a divalent metal cation site is built by E58, H66, and H68. The short motif at H66–H68 is the RCR-2 element. Catalysis depends on Y106, which acts as the For DNA cleavage activity. An RCR-3 motif is present at residues Y106–K109. N110 lines the a divalent metal cation pocket. The tract at residues S180–Y192 is oligomerization. G234–S241 provides a ligand contact to ATP. The segment at V257–P275 is transactivation. The Nuclear localization signal signature appears at K297–S308.

The protein belongs to the geminiviridae Rep protein family. Homooligomer. Rep binds to repeated DNA motifs (iterons). Forms the O-complex, which is a Rep-DNA complex involved in the initiation of RCR. Part of the C- and V-complexes which are RepA-Rep-DNA complexes involved in the c-sense and v-sense transcription. It depends on Mg(2+) as a cofactor. The cofactor is Mn(2+).

Its subcellular location is the host nucleus. Functionally, essential for the replication of viral ssDNA. The closed circular ssDNA genome is first converted to a superhelical dsDNA. Rep binds a specific region at the genome origin of replication. It introduces an endonucleolytic nick within the conserved sequence 5'-TAATATTAC-3' in the intergenic region of the genome present in all geminiviruses, thereby initiating the rolling circle replication (RCR). Following cleavage, binds covalently to the 5'-phosphate of DNA as a tyrosyl ester. The cleavage gives rise to a free 3'-OH that serves as a primer for the cellular DNA polymerase. The polymerase synthesizes the (+) strand DNA by rolling circle mechanism. After one round of replication, a Rep-catalyzed nucleotidyl transfer reaction releases a circular single-stranded virus genome, thereby terminating the replication. Displays origin-specific DNA cleavage, nucleotidyl transferase, ATPase and helicase activities. Acts as an inhibitor of C-sense gene transcription. The chain is Replication-associated protein from Sugarcane streak virus (isolate South Africa) (SSV).